A 544-amino-acid chain; its full sequence is CTP synthase (544 aa).

An amidoligase domain region spans residues 1–266 (MKYIFVTGGV…GKAVEELLGL (266 aa)). Position 12 (Ser12) interacts with CTP. Ser12 contacts UTP. 13-18 (SLGKGV) is an ATP binding site. Residue Tyr53 coordinates L-glutamine. Residue Asp70 participates in ATP binding. Mg(2+) contacts are provided by Asp70 and Glu140. CTP is bound by residues 147-149 (DIE), 187-192 (KTKPTQ), and Lys223. UTP contacts are provided by residues 187–192 (KTKPTQ) and Lys223. The 254-residue stretch at 291-544 (TIAIAGKYTA…VKAALEHQQQ (254 aa)) folds into the Glutamine amidotransferase type-1 domain. Gly356 is an L-glutamine binding site. Cys383 functions as the Nucleophile; for glutamine hydrolysis in the catalytic mechanism. L-glutamine is bound by residues 384 to 387 (LGMQ), Glu407, and Arg467. Catalysis depends on residues His517 and Glu519.

Belongs to the CTP synthase family. Homotetramer.

The catalysed reaction is UTP + L-glutamine + ATP + H2O = CTP + L-glutamate + ADP + phosphate + 2 H(+). It catalyses the reaction L-glutamine + H2O = L-glutamate + NH4(+). It carries out the reaction UTP + NH4(+) + ATP = CTP + ADP + phosphate + 2 H(+). It participates in pyrimidine metabolism; CTP biosynthesis via de novo pathway; CTP from UDP: step 2/2. Allosterically activated by GTP, when glutamine is the substrate; GTP has no effect on the reaction when ammonia is the substrate. The allosteric effector GTP functions by stabilizing the protein conformation that binds the tetrahedral intermediate(s) formed during glutamine hydrolysis. Inhibited by the product CTP, via allosteric rather than competitive inhibition. In terms of biological role, catalyzes the ATP-dependent amination of UTP to CTP with either L-glutamine or ammonia as the source of nitrogen. Regulates intracellular CTP levels through interactions with the four ribonucleotide triphosphates. This is CTP synthase from Deinococcus radiodurans (strain ATCC 13939 / DSM 20539 / JCM 16871 / CCUG 27074 / LMG 4051 / NBRC 15346 / NCIMB 9279 / VKM B-1422 / R1).